A 122-amino-acid polypeptide reads, in one-letter code: Large ribosomal subunit protein uL14 (122 aa).

This sequence belongs to the universal ribosomal protein uL14 family. Part of the 50S ribosomal subunit. Forms a cluster with proteins L3 and L19. In the 70S ribosome, L14 and L19 interact and together make contacts with the 16S rRNA in bridges B5 and B8.

Binds to 23S rRNA. Forms part of two intersubunit bridges in the 70S ribosome. This chain is Large ribosomal subunit protein uL14, found in Rickettsia rickettsii (strain Iowa).